The following is a 185-amino-acid chain: MPYETPQAAAVAWLPYSQLATTLDQPTLDWLFDEGSLTRRLTRLSHDHFSVTPLFEGWQPLRDDECAALGLAPGEEGWVREVYLRGHDQPWVFARSVAGRSVLERGGLDLETLGTRSLGELLFCDQAFIRHPLEACRYPQTWLPTKVAHEGLWGRRSRFERSGLDLLVAEVFLPALWQAAKEETR.

Residues arginine 80, leucine 118, and glutamate 170 each contribute to the substrate site.

Belongs to the UbiC family.

It localises to the cytoplasm. The enzyme catalyses chorismate = 4-hydroxybenzoate + pyruvate. It participates in cofactor biosynthesis; ubiquinone biosynthesis. Its function is as follows. Removes the pyruvyl group from chorismate, with concomitant aromatization of the ring, to provide 4-hydroxybenzoate (4HB) for the ubiquinone pathway. This is Probable chorismate pyruvate-lyase 2 from Pseudomonas entomophila (strain L48).